Here is an 84-residue protein sequence, read N- to C-terminus: MSEKIRTMQGRVISDKMDKSIVVAIERMVKHPIYGKYIKRTTKLHAHDENNECGLGDTVEIRECRPLSKTKSWTLVNIVEKAKA.

It belongs to the universal ribosomal protein uS17 family. As to quaternary structure, part of the 30S ribosomal subunit.

Its function is as follows. One of the primary rRNA binding proteins, it binds specifically to the 5'-end of 16S ribosomal RNA. This is Small ribosomal subunit protein uS17 from Aliivibrio fischeri (strain ATCC 700601 / ES114) (Vibrio fischeri).